The chain runs to 629 residues: tRNA uridine 5-carboxymethylaminomethyl modification enzyme MnmG (629 aa).

Residues G13–G18, V125, and S180 each bind FAD. NAD(+) is bound at residue G273–F287. FAD is bound at residue Q370.

This sequence belongs to the MnmG family. Homodimer. Heterotetramer of two MnmE and two MnmG subunits. It depends on FAD as a cofactor.

It localises to the cytoplasm. NAD-binding protein involved in the addition of a carboxymethylaminomethyl (cmnm) group at the wobble position (U34) of certain tRNAs, forming tRNA-cmnm(5)s(2)U34. The chain is tRNA uridine 5-carboxymethylaminomethyl modification enzyme MnmG from Salmonella paratyphi A (strain ATCC 9150 / SARB42).